A 625-amino-acid polypeptide reads, in one-letter code: Histone promoter control protein 2 (625 aa).

2 disordered regions span residues 1–164 (MDQK…FAAK) and 295–437 (APAE…VSPP). Over residues 11-28 (SKSGSKQTKSSGKMQTQT) the composition is skewed to low complexity. Over residues 29 to 39 (DTNAEVLNTDN) the composition is skewed to polar residues. S47 and S49 each carry phosphoserine. A compositionally biased stretch (low complexity) spans 83 to 105 (SPSPIIISGSSSTSPSGPSSSST). Polar residues predominate over residues 113 to 135 (NRFNKNTVELYQHSPSPVMTTNK). The span at 136–154 (TDTEEKRQNNRNMDNKNTP) shows a compositional bias: basic and acidic residues. Residues 155 to 164 (ERGSSSFAAK) are compositionally biased toward polar residues. Low complexity-rich tracts occupy residues 305–321 (SISSVTNSDSNISSSKK) and 330–355 (SSSASAILPKPTTTKTSKKAASNSSD). Composition is skewed to polar residues over residues 363-381 (SNKTTSAIKKESNAGSKLN) and 404-415 (GNSTEAKNSTSN). A Phosphoserine modification is found at S435.

The protein belongs to the HPC2 family. In terms of assembly, component of the HIR complex, composed of HIR1, HIR2, HIR3 and HPC2. This complex may consist of one copy of HIR1 and HIR3 and two copies of HIR2 and HPC2. The HIR complex interacts with ASF1. Interacts with RTT106.

The protein resides in the nucleus. It localises to the chromosome. Functionally, component of the HIR complex, which functions as a histone chaperone that cooperates with ASF1 to promote replication-independent chromatin assembly. The HIR complex is also required for the periodic repression of three of the four histone gene loci during cell cycle as well as for autogenous regulation of the HTA1-HTB1 locus by H2A and H2B. DNA-binding by the HIR complex may repress transcription by inhibiting nucleosome remodeling by the SWI/SNF complex. The HIR complex may also be required for transcriptional silencing of centromeric, telomeric and mating-type loci in the absence of CAF-1. The sequence is that of Histone promoter control protein 2 (HPC2) from Saccharomyces cerevisiae (strain ATCC 204508 / S288c) (Baker's yeast).